We begin with the raw amino-acid sequence, 68 residues long: Protein SrnB (68 aa).

The helical transmembrane segment at 23–42 (YALIGLLAVCATVLCFSLIF) threads the bilayer.

This sequence belongs to the Hok/Gef family.

Its subcellular location is the cell inner membrane. Its function is as follows. Toxic component of a type I toxin-antitoxin (TA) system. Its normal function is believed to be effective plasmid stabilization through postsegregational killing of cells that have lost the F plasmid. Promotes degradation of stable RNA in E.coli. The polypeptide is Protein SrnB (srnB) (Escherichia coli (strain K12)).